Here is a 479-residue protein sequence, read N- to C-terminus: UDP-glucose flavonoid 3-O-glucosyltransferase 6 (479 aa).

The active-site Proton acceptor is the His-17. An an anthocyanidin-binding site is contributed by His-17. Asp-121 acts as the Charge relay in catalysis. UDP-alpha-D-glucose is bound by residues Thr-143, Ala-354, Gln-356, His-371, Trp-374, Asn-375, Ser-376, and Glu-379. Ala-394 contacts an anthocyanidin. Positions 395 and 396 each coordinate UDP-alpha-D-glucose. Positions 454 to 479 (MSRKALEEDGSSYSSLGRFLDQIQTS) are disordered.

This sequence belongs to the UDP-glycosyltransferase family. As to expression, strongly expressed in achenes, with lower expression levels detected in receptacles.

It catalyses the reaction a flavonol + UDP-alpha-D-glucose = a flavonol 3-O-beta-D-glucoside + UDP + H(+). In terms of biological role, broad spectrum multifunctional glucosyltransferase. Catalyzes the formation of flavonol 3-O-glucosides during fruit ripening. Accepted substrates include several flavonoids, hydroxycoumarins and beta-naphthols. Uses UDP-Glc as a sugar donor, but not UDP-Gal or UDP-GlcUA. May also be involved in detoxification of xenobiotics. This chain is UDP-glucose flavonoid 3-O-glucosyltransferase 6, found in Fragaria ananassa (Strawberry).